The following is a 606-amino-acid chain: Aspartate--tRNA(Asp/Asn) ligase (606 aa).

Residue E177 participates in L-aspartate binding. Positions 201–204 are aspartate; that stretch reads QLFK. Residue R223 participates in L-aspartate binding. ATP contacts are provided by residues 223-225 and Q232; that span reads RDE. Residue H461 coordinates L-aspartate. E499 is a binding site for ATP. R506 is a binding site for L-aspartate. Residue 551-554 coordinates ATP; it reads GMDR.

It belongs to the class-II aminoacyl-tRNA synthetase family. Type 1 subfamily. As to quaternary structure, homodimer.

It is found in the cytoplasm. The enzyme catalyses tRNA(Asx) + L-aspartate + ATP = L-aspartyl-tRNA(Asx) + AMP + diphosphate. Its function is as follows. Aspartyl-tRNA synthetase with relaxed tRNA specificity since it is able to aspartylate not only its cognate tRNA(Asp) but also tRNA(Asn). Reaction proceeds in two steps: L-aspartate is first activated by ATP to form Asp-AMP and then transferred to the acceptor end of tRNA(Asp/Asn). The sequence is that of Aspartate--tRNA(Asp/Asn) ligase from Prochlorococcus marinus (strain MIT 9303).